The following is a 515-amino-acid chain: Maturase K (515 aa).

Belongs to the intron maturase 2 family. MatK subfamily.

The protein localises to the plastid. The protein resides in the chloroplast. Its function is as follows. Usually encoded in the trnK tRNA gene intron. Probably assists in splicing its own and other chloroplast group II introns. The sequence is that of Maturase K from Larix laricina (Tamarack).